The chain runs to 266 residues: Dihydropteroate synthase (266 aa).

In terms of domain architecture, Pterin-binding spans 12 to 260 (AAIMGILNVT…DVKANQDIVA (249 aa)). Mg(2+) is bound at residue N19. Residues T59, D93, N112, D176, K212, and 248-250 (RVH) contribute to the (7,8-dihydropterin-6-yl)methyl diphosphate site.

This sequence belongs to the DHPS family. In terms of assembly, homodimer or homotrimer. Requires Mg(2+) as cofactor.

It carries out the reaction (7,8-dihydropterin-6-yl)methyl diphosphate + 4-aminobenzoate = 7,8-dihydropteroate + diphosphate. It participates in cofactor biosynthesis; tetrahydrofolate biosynthesis; 7,8-dihydrofolate from 2-amino-4-hydroxy-6-hydroxymethyl-7,8-dihydropteridine diphosphate and 4-aminobenzoate: step 1/2. Functionally, catalyzes the condensation of para-aminobenzoate (pABA) with 6-hydroxymethyl-7,8-dihydropterin diphosphate (DHPt-PP) to form 7,8-dihydropteroate (H2Pte), the immediate precursor of folate derivatives. The polypeptide is Dihydropteroate synthase (folP) (Streptococcus pyogenes serotype M3 (strain ATCC BAA-595 / MGAS315)).